A 259-amino-acid polypeptide reads, in one-letter code: V-type proton ATPase subunit D (259 aa).

The disordered stretch occupies residues 214–259 (KLKEQEAAQRALEGPPKEEAGGTHSENQPPRNLLAVEEDNLPVLFN).

This sequence belongs to the V-ATPase D subunit family. As to quaternary structure, V-ATPase is a heteromultimeric enzyme made up of two complexes: the ATP-hydrolytic V1 complex and the proton translocation V0 complex. The V1 complex consists of three catalytic AB heterodimers that form a heterohexamer, three peripheral stalks each consisting of EG heterodimers, one central rotor including subunits D and F, and the regulatory subunits C and H. The proton translocation complex V0 consists of the proton transport subunit a, a ring of proteolipid subunits c9c'', rotary subunit d, and The proton translocation complex V0 consists of the proton transport subunit a, a ring of proteolipid subunits c9c'', rotary subunit d, subunits e and f, and the accessory subunits vah-19/Ac45 and vah-20/PRR.

Subunit of the V1 complex of vacuolar(H+)-ATPase (V-ATPase), a multisubunit enzyme composed of a peripheral complex (V1) that hydrolyzes ATP and a membrane integral complex (V0) that translocates protons. V-ATPase is responsible for acidifying and maintaining the pH of intracellular compartments and in some cell types, is targeted to the plasma membrane, where it is responsible for acidifying the extracellular environment. This Caenorhabditis briggsae protein is V-type proton ATPase subunit D.